The following is a 103-amino-acid chain: Histone H4 (103 aa).

A compositionally biased stretch (gly residues) spans 1-14 (MSGRGKGGKGLGKG). The disordered stretch occupies residues 1–20 (MSGRGKGGKGLGKGGAKRHR). S2 bears the N-acetylserine mark. K6 and K13 each carry N6-acetyl-N6-methyllysine; alternate. The residue at position 17 (K17) is an N6-acetyllysine. The DNA-binding element occupies 17 to 21 (KRHRK). N6-methyllysine is present on K21.

The protein belongs to the histone H4 family. In terms of assembly, the nucleosome is a histone octamer containing two molecules each of H2A, H2B, H3 and H4 assembled in one H3-H4 heterotetramer and two H2A-H2B heterodimers. The octamer wraps approximately 147 bp of DNA.

It localises to the nucleus. It is found in the chromosome. In terms of biological role, core component of nucleosome. Nucleosomes wrap and compact DNA into chromatin, limiting DNA accessibility to the cellular machineries which require DNA as a template. Histones thereby play a central role in transcription regulation, DNA repair, DNA replication and chromosomal stability. DNA accessibility is regulated via a complex set of post-translational modifications of histones, also called histone code, and nucleosome remodeling. This chain is Histone H4, found in Holothuria tubulosa (Tubular sea cucumber).